A 495-amino-acid polypeptide reads, in one-letter code: Glycogen synthase (495 aa).

Lysine 24 contributes to the ADP-alpha-D-glucose binding site.

The protein belongs to the glycosyltransferase 1 family. Bacterial/plant glycogen synthase subfamily.

It catalyses the reaction [(1-&gt;4)-alpha-D-glucosyl](n) + ADP-alpha-D-glucose = [(1-&gt;4)-alpha-D-glucosyl](n+1) + ADP + H(+). It participates in glycan biosynthesis; glycogen biosynthesis. In terms of biological role, synthesizes alpha-1,4-glucan chains using ADP-glucose. The polypeptide is Glycogen synthase (Nitrosomonas europaea (strain ATCC 19718 / CIP 103999 / KCTC 2705 / NBRC 14298)).